The chain runs to 1404 residues: DNA-directed RNA polymerase subunit beta' (1404 aa).

Zn(2+) contacts are provided by cysteine 70, cysteine 72, cysteine 85, and cysteine 88. Residues aspartate 460, aspartate 462, and aspartate 464 each contribute to the Mg(2+) site. Residues cysteine 814, cysteine 888, cysteine 895, and cysteine 898 each contribute to the Zn(2+) site.

The protein belongs to the RNA polymerase beta' chain family. As to quaternary structure, the RNAP catalytic core consists of 2 alpha, 1 beta, 1 beta' and 1 omega subunit. When a sigma factor is associated with the core the holoenzyme is formed, which can initiate transcription. The cofactor is Mg(2+). It depends on Zn(2+) as a cofactor.

The enzyme catalyses RNA(n) + a ribonucleoside 5'-triphosphate = RNA(n+1) + diphosphate. In terms of biological role, DNA-dependent RNA polymerase catalyzes the transcription of DNA into RNA using the four ribonucleoside triphosphates as substrates. In Shewanella piezotolerans (strain WP3 / JCM 13877), this protein is DNA-directed RNA polymerase subunit beta'.